The primary structure comprises 446 residues: Glucarate dehydratase-related protein (446 aa).

4 residues coordinate substrate: His31, Thr104, Tyr149, and Lys204. Lys206 functions as the Proton acceptor in the catalytic mechanism. Residues Asp234, Glu265, and Asn288 each coordinate Mg(2+). A substrate-binding site is contributed by Asp234–Asn236. Substrate-binding positions include Asn288, His338–Asn340, His367, and Arg421. The active-site Proton acceptor is His338.

The protein belongs to the mandelate racemase/muconate lactonizing enzyme family. GlucD subfamily. Requires a divalent metal cation as cofactor.

Does not seem to have an in-vivo activity on glucarate or idarate. Its real substrate is unknown. This is Glucarate dehydratase-related protein (gudX) from Escherichia coli (strain K12).